The sequence spans 250 residues: Anti-Pycsar protein Apyc1 (250 aa).

The tract at residues 19 to 220 (YNNNALVKCN…AVQEMIMLMH (202 aa)) is beta-lactamase-like. Zn(2+) contacts are provided by His61, His63, Asp65, His66, His146, Asp166, and His220.

This sequence belongs to the anti-Pycsar protein Apyc1 family. In terms of assembly, homodimer. Requires Zn(2+) as cofactor.

It carries out the reaction 3',5'-cyclic CMP + H2O = CMP + H(+). The catalysed reaction is 3',5'-cyclic UMP + H2O = UMP + H(+). Counteracts the endogenous Pycsar antiviral defense system. Phosphodiesterase that enables metal-dependent hydrolysis of host cyclic nucleotide Pycsar defense signals such as cCMP and cUMP. In Paenibacillus xerothermodurans, this protein is Anti-Pycsar protein Apyc1.